Here is a 721-residue protein sequence, read N- to C-terminus: Penicillin-binding protein activator LpoA (721 aa).

The N-terminal stretch at 1–26 (MVPLTFLRTKASRSLPIMLAALIFAG) is a signal peptide. Cys27 carries N-palmitoyl cysteine lipidation. Cys27 is lipidated: S-diacylglycerol cysteine. A compositionally biased stretch (polar residues) spans 316–330 (TSDLTSAQAPAQGTM). The disordered stretch occupies residues 316–393 (TSDLTSAQAP…PAAQPQAVAA (78 aa)). The span at 331 to 393 (QNPVTAPTTP…PAAQPQAVAA (63 aa)) shows a compositional bias: low complexity.

Belongs to the LpoA family. Interacts with PBP1a.

The protein localises to the cell outer membrane. Functionally, regulator of peptidoglycan synthesis that is essential for the function of penicillin-binding protein 1A (PBP1a). The protein is Penicillin-binding protein activator LpoA of Enterobacter sp. (strain 638).